Here is a 132-residue protein sequence, read N- to C-terminus: Small ribosomal subunit protein uS8 (132 aa).

It belongs to the universal ribosomal protein uS8 family. In terms of assembly, part of the 30S ribosomal subunit. Contacts proteins S5 and S12.

Its function is as follows. One of the primary rRNA binding proteins, it binds directly to 16S rRNA central domain where it helps coordinate assembly of the platform of the 30S subunit. The protein is Small ribosomal subunit protein uS8 of Clavibacter michiganensis subsp. michiganensis (strain NCPPB 382).